A 177-amino-acid chain; its full sequence is MASLNMIVAVNKTGGIGFENQIPWHEPEDLKHFKAVTMNSVLIMGRKTFASLPKVLPGRLHVVVSKTVPPTQNTDQVVYVSTYQIAVRTASLLVDKPEYSQIFVIGGKSAYENLAAYVDKLYLTRVQLNTQQDTELDLSLFKSWKLVSEVPTITENKTKLIFQIWINPNPISEEPTC.

The DHFR domain occupies 3–167 (SLNMIVAVNK…TKLIFQIWIN (165 aa)).

This sequence belongs to the dihydrofolate reductase family. As to quaternary structure, homodimer.

It carries out the reaction (6S)-5,6,7,8-tetrahydrofolate + NADP(+) = 7,8-dihydrofolate + NADPH + H(+). It participates in cofactor biosynthesis; tetrahydrofolate biosynthesis; 5,6,7,8-tetrahydrofolate from 7,8-dihydrofolate: step 1/1. Functionally, key enzyme in folate metabolism. Catalyzes an essential reaction for de novo glycine and purine synthesis, and for DNA precursor synthesis. In Escherichia coli, this protein is Dihydrofolate reductase type 9 (dhfrIX).